Consider the following 295-residue polypeptide: MSGALDVLQMKEEDVLKFLAAGTHLGGTNLDFQMEQYIYKRKSDGIYIINLKRTWEKLLLAARAIVAIENPADVSVISSRNTGQRAVLKFAAATGATPIAGRFTPGTFTNQIQAAFREPRLLVVTDPRADHQPLTEASYVNLPTIALCNTDSPLRYVDIAIPCNNKGAHSVGLMWWMLAREVLRMRGTISREHPWEVMPDLYFYRDPEEIEKEEQAAAEKAVTKEEFQGEWTAPAPEFTAAQPEVADWSEGVQVPSVPIQQFPTEDWSARPFTEDWSAAPTAQATEWVGTTSELS.

The residue at position 2 (Ser2) is an N-acetylserine. Ser43 bears the Phosphoserine mark. N6-acetyllysine is present on Lys52. Positions 54 to 113 are interaction with PPP1R16B; the sequence is TWEKLLLAARAIVAIENPADVSVISSRNTGQRAVLKFAAATGATPIAGRFTPGTFTNQIQ. Residue Lys89 is modified to N6-acetyllysine; alternate. A Glycyl lysine isopeptide (Lys-Gly) (interchain with G-Cter in SUMO2); alternate cross-link involves residue Lys89. Phosphothreonine is present on Thr97. 2 laminin-binding regions span residues 161–180 and 205–229; these read IPCNNKGAHSVGLMWWMLAR and RDPEEIEKEEQAAAEKAVTKEEFQG. Over residues 214-227 the composition is skewed to basic and acidic residues; the sequence is EQAAAEKAVTKEEF. Residues 214 to 240 form a disordered region; the sequence is EQAAAEKAVTKEEFQGEWTAPAPEFTA. [DE]-W-[ST] repeat units follow at residues 230–232, 247–249, 266–268, and 275–277; these read EWT and DWS. Residues 242-295 form a laminin-binding region; that stretch reads QPEVADWSEGVQVPSVPIQQFPTEDWSARPFTEDWSAAPTAQATEWVGTTSELS. Positions 263 to 295 are disordered; it reads PTEDWSARPFTEDWSAAPTAQATEWVGTTSELS. Residues 280 to 295 show a composition bias toward polar residues; sequence PTAQATEWVGTTSELS.

Belongs to the universal ribosomal protein uS2 family. Monomer (37LRP) and homodimer (67LR). Component of the small ribosomal subunit. Mature ribosomes consist of a small (40S) and a large (60S) subunit. The 40S subunit contains about 33 different proteins and 1 molecule of RNA (18S). The 60S subunit contains about 49 different proteins and 3 molecules of RNA (28S, 5.8S and 5S). Interacts with RPS21. Interacts with several laminins including at least LAMB1. Interacts with MDK. The mature dimeric form interacts with PPP1R16B (via its fourth ankyrin repeat). Interacts with PPP1CA only in the presence of PPP1R16B. In terms of processing, acylated. Acylation may be a prerequisite for conversion of the monomeric 37 kDa laminin receptor precursor (37LRP) to the mature dimeric 67 kDa laminin receptor (67LR), and may provide a mechanism for membrane association. Post-translationally, cleaved by stromelysin-3 (ST3) at the cell surface. Cleavage by stromelysin-3 may be a mechanism to alter cell-extracellular matrix interactions.

Its subcellular location is the cell membrane. The protein localises to the cytoplasm. The protein resides in the nucleus. Functionally, required for the assembly and/or stability of the 40S ribosomal subunit. Required for the processing of the 20S rRNA-precursor to mature 18S rRNA in a late step of the maturation of 40S ribosomal subunits. Also functions as a cell surface receptor for laminin. Plays a role in cell adhesion to the basement membrane and in the consequent activation of signaling transduction pathways. May play a role in cell fate determination and tissue morphogenesis. Also acts as a receptor for several other ligands, including the pathogenic prion protein, viruses, and bacteria. Acts as a PPP1R16B-dependent substrate of PPP1CA. This chain is Small ribosomal subunit protein uS2, found in Ovis aries (Sheep).